The primary structure comprises 311 residues: Methionyl-tRNA formyltransferase (311 aa).

Position 112 to 115 (112 to 115 (SLLP)) interacts with (6S)-5,6,7,8-tetrahydrofolate.

It belongs to the Fmt family.

It catalyses the reaction L-methionyl-tRNA(fMet) + (6R)-10-formyltetrahydrofolate = N-formyl-L-methionyl-tRNA(fMet) + (6S)-5,6,7,8-tetrahydrofolate + H(+). In terms of biological role, attaches a formyl group to the free amino group of methionyl-tRNA(fMet). The formyl group appears to play a dual role in the initiator identity of N-formylmethionyl-tRNA by promoting its recognition by IF2 and preventing the misappropriation of this tRNA by the elongation apparatus. The polypeptide is Methionyl-tRNA formyltransferase (Geobacter metallireducens (strain ATCC 53774 / DSM 7210 / GS-15)).